The following is a 130-amino-acid chain: Small ribosomal subunit protein uS8 (130 aa).

This sequence belongs to the universal ribosomal protein uS8 family. As to quaternary structure, part of the 30S ribosomal subunit. Contacts proteins S5 and S12.

Its function is as follows. One of the primary rRNA binding proteins, it binds directly to 16S rRNA central domain where it helps coordinate assembly of the platform of the 30S subunit. This is Small ribosomal subunit protein uS8 from Pseudomonas fluorescens (strain Pf0-1).